We begin with the raw amino-acid sequence, 356 residues long: Phosphate acyltransferase (356 aa).

The protein belongs to the PlsX family. Homodimer. Probably interacts with PlsY.

It is found in the cytoplasm. The catalysed reaction is a fatty acyl-[ACP] + phosphate = an acyl phosphate + holo-[ACP]. The protein operates within lipid metabolism; phospholipid metabolism. In terms of biological role, catalyzes the reversible formation of acyl-phosphate (acyl-PO(4)) from acyl-[acyl-carrier-protein] (acyl-ACP). This enzyme utilizes acyl-ACP as fatty acyl donor, but not acyl-CoA. This is Phosphate acyltransferase from Escherichia coli (strain 55989 / EAEC).